A 311-amino-acid polypeptide reads, in one-letter code: MDKSCNSSGDSSAVSASATSSTGNNTTNRDHYLRQLNKLSHKISKPTNSSSSVSVANREIDLPPPPPLQINQGNLHQHQPPVYNINKNDFRDVVQKLTGSPAHERISAPPQQPIHHPKPQQSSRLHRIRPPPLVHVINRPPGLLNDALIPQGSHHMNQNWTGVGFNLRPTAPLSPLPPLPPVHAAAESPVSSYMRYLQNSMFAIDSNRKEFSGLSPLAPLVSPRWYQQQENAPPSQHNSFPPPHPPPPSSAVSQTVPTSIPAPPLFGCSSSPKSPYGLLSPSILLSPSSGQLGFPVSPTTVPLPSPKYKGH.

The span at 1–27 shows a compositional bias: low complexity; that stretch reads MDKSCNSSGDSSAVSASATSSTGNNTT. Residues 1-78 form a disordered region; sequence MDKSCNSSGD…QINQGNLHQH (78 aa). The short motif at 90 to 99 is the VQ element; that stretch reads FRDVVQKLTG. Disordered regions lie at residues 103 to 125, 228 to 266, and 290 to 311; these read HERI…SSRL, QQEN…PPLF, and GQLG…YKGH. Residues 240–249 are compositionally biased toward pro residues; it reads FPPPHPPPPS. Positions 290–302 are enriched in low complexity; the sequence is GQLGFPVSPTTVP.

In terms of assembly, interacts (via N-terminus) with WRKY8. In terms of tissue distribution, highly expressed in roots and at lower levels in rosette leaves, cauline leaves, stems, flowers and siliques.

The protein resides in the nucleus. Functionally, functions as a negative regulator of salt stress response. Functions as a repressor of WRKY8 transcription factor by decreasing the DNA-binding activity of WRKY8 and acts antagonistically with WRKY8 to regulate sodium and potassium homeostasis under salt stress. This chain is VQ motif-containing protein 9, found in Arabidopsis thaliana (Mouse-ear cress).